The following is a 349-amino-acid chain: Fe(3+) ions import ATP-binding protein FbpC (349 aa).

Residues L4–L236 form the ABC transporter domain. G36–T43 contributes to the ATP binding site.

This sequence belongs to the ABC transporter superfamily. Fe(3+) ion importer (TC 3.A.1.10) family. The complex is composed of two ATP-binding proteins (FbpC), two transmembrane proteins (FbpB) and a solute-binding protein (FbpA).

The protein resides in the cell inner membrane. It catalyses the reaction Fe(3+)(out) + ATP + H2O = Fe(3+)(in) + ADP + phosphate + H(+). Part of the ABC transporter complex FbpABC involved in Fe(3+) ions import. Responsible for energy coupling to the transport system. The chain is Fe(3+) ions import ATP-binding protein FbpC from Yersinia pestis bv. Antiqua (strain Antiqua).